Here is a 586-residue protein sequence, read N- to C-terminus: Capsid scaffolding protein (586 aa).

Active-site charge relay system residues include His53, Ser123, and His142. Positions 251–263 (SEETPENAIKDRS) are enriched in basic and acidic residues. 4 disordered regions span residues 251 to 288 (SEETPENAIKDRSVSTQTAPSFDISESQQPSGQTHVPA), 330 to 364 (ARRDNDRRPVSPSREFSRRSRDSTHECSPGRDIWP), 458 to 486 (NKRDSEYSENNPRKRSARTISENDPYFPG), and 530 to 586 (SASN…MMAD). Over residues 264-284 (VSTQTAPSFDISESQQPSGQT) the composition is skewed to polar residues. Residues 312–331 (EDMVYVPFEKYASLLAASAR) are interaction with pAP. 2 interaction with major capsid protein regions span residues 566–586 (DAQTKLKRKKEAAAFAQMMAD) and 567–586 (AQTKLKRKKEAAAFAQMMAD).

The protein belongs to the herpesviridae capsid scaffolding protein family. As to quaternary structure, homomultimer. Interacts with major capsid protein. In terms of assembly, exists in a monomer-dimer equilibrium with the dimer being the active species. Post-translationally, capsid scaffolding protein is cleaved by assemblin after formation of the spherical procapsid. As a result, the capsid obtains its mature, icosahedral shape. Cleavages occur at two or more sites: release (R-site) and maturation (M-site).

The protein resides in the host cytoplasm. It is found in the host nucleus. It carries out the reaction Cleaves -Ala-|-Ser- and -Ala-|-Ala- bonds in the scaffold protein.. Functionally, acts as a scaffold protein by binding major capsid protein in the cytoplasm, inducing the nuclear localization of both proteins. Multimerizes in the nucleus such as major capsid protein forms the icosahedral T=16 capsid. Autocatalytic cleavage releases the assembly protein, and subsequently abolishes interaction with major capsid protein. Cleavages products are evicted from the capsid before or during DNA packaging. Its function is as follows. Protease that plays an essential role in virion assembly within the nucleus. Catalyzes the cleavage of the assembly protein after formation of the spherical procapsid. By that cleavage, the capsid matures and gains its icosahedral shape. The cleavage sites seem to include -Ala-Ser-, -Ala-Ala-, as well as Ala-Thr bonds. Assemblin and cleavages products are evicted from the capsid before or during DNA packaging. Plays a major role in capsid assembly. Acts as a scaffold protein by binding major capsid protein. Multimerizes in the nucleus such as major capsid protein forms the icosahedral T=16 capsid. Cleaved by assemblin after capsid completion. The cleavages products are evicted from the capsid before or during DNA packaging. The chain is Capsid scaffolding protein from Gallus gallus (Chicken).